Here is a 406-residue protein sequence, read N- to C-terminus: Peptidase T (406 aa).

Zn(2+) is bound at residue His-78. Asp-80 is a catalytic residue. Asp-139 provides a ligand contact to Zn(2+). The Proton acceptor role is filled by Glu-173. Glu-174, Asp-196, and His-378 together coordinate Zn(2+).

Belongs to the peptidase M20B family. Requires Zn(2+) as cofactor.

It is found in the cytoplasm. It catalyses the reaction Release of the N-terminal residue from a tripeptide.. In terms of biological role, cleaves the N-terminal amino acid of tripeptides. The polypeptide is Peptidase T (Clostridium perfringens (strain 13 / Type A)).